A 109-amino-acid polypeptide reads, in one-letter code: Nucleoid-associated protein VV1_2004 (109 aa).

The protein belongs to the YbaB/EbfC family. As to quaternary structure, homodimer.

It localises to the cytoplasm. The protein localises to the nucleoid. Its function is as follows. Binds to DNA and alters its conformation. May be involved in regulation of gene expression, nucleoid organization and DNA protection. The chain is Nucleoid-associated protein VV1_2004 from Vibrio vulnificus (strain CMCP6).